The following is a 555-amino-acid chain: Phosphoglucomutase (555 aa).

Alpha-D-glucose 1,6-bisphosphate is bound by residues Arg-22 and Ser-114. Ser-114 serves as the catalytic Phosphoserine intermediate. The Mg(2+) site is built by Ser-114, Asp-279, Asp-281, and Asp-283. Ser-114 bears the Phosphoserine mark. Asp-283, Arg-284, Thr-347, Glu-366, Ser-368, and Lys-379 together coordinate alpha-D-glucose 1,6-bisphosphate.

Belongs to the phosphohexose mutase family. As to quaternary structure, monomer. Mg(2+) serves as cofactor.

It localises to the cytoplasm. The catalysed reaction is alpha-D-glucose 1-phosphate = alpha-D-glucose 6-phosphate. It carries out the reaction O-phospho-L-seryl-[protein] + alpha-D-glucose 1-phosphate = alpha-D-glucose 1,6-bisphosphate + L-seryl-[protein]. The enzyme catalyses alpha-D-glucose 1,6-bisphosphate + L-seryl-[protein] = O-phospho-L-seryl-[protein] + alpha-D-glucose 6-phosphate. Catalyzes the reversible isomerization of alpha-D-glucose 1-phosphate to alpha-D-glucose 6-phosphate. The mechanism proceeds via the intermediate compound alpha-D-glucose 1,6-bisphosphate. Key enzyme in hexose metabolism. The reverse reaction is an essential step for biosynthesis because glucose 1-phosphate is the starting point for the synthesis of UDP-glucose, which acts as a precursor for the synthesis of oligosaccharides and trehalose. This chain is Phosphoglucomutase (pgmA), found in Aspergillus fumigatus (strain ATCC MYA-4609 / CBS 101355 / FGSC A1100 / Af293) (Neosartorya fumigata).